The chain runs to 602 residues: Portal protein (602 aa).

2 coiled-coil regions span residues 324 to 352 (NNQA…LNDE) and 486 to 542 (ITND…EQGA). The segment at 567-602 (ANNANNEESNNKPKKKLKTSDKTTWRKYPSAQNLDY) is disordered.

Homododecamer.

The protein resides in the virion. Its function is as follows. Forms the portal vertex of the capsid. This portal plays critical roles in head assembly, genome packaging, neck/tail attachment, and genome ejection. The portal protein multimerizes as a single ring-shaped homododecamer arranged around a central channel. This chain is Portal protein, found in Helicobacter pylori bacteriophage KHP30.